The following is a 269-amino-acid chain: Small ribosomal subunit protein uS3 (269 aa).

The region spanning 38–106 is the KH type-2 domain; the sequence is IREWLHKNLE…QIQLNILEVK (69 aa). Positions 215–269 are disordered; it reads AQKAARQAAQGGRGGRGGNRRGRGDRPDRRGGRRRAEAAKQSAETPAPQTENAGA. Residues 236–252 are compositionally biased toward basic and acidic residues; that stretch reads GRGDRPDRRGGRRRAEA. Positions 256–269 are enriched in polar residues; the sequence is SAETPAPQTENAGA.

This sequence belongs to the universal ribosomal protein uS3 family. In terms of assembly, part of the 30S ribosomal subunit. Forms a tight complex with proteins S10 and S14.

In terms of biological role, binds the lower part of the 30S subunit head. Binds mRNA in the 70S ribosome, positioning it for translation. This Cutibacterium acnes (strain DSM 16379 / KPA171202) (Propionibacterium acnes) protein is Small ribosomal subunit protein uS3.